The primary structure comprises 383 residues: Succinyl-diaminopimelate desuccinylase (383 aa).

Residue His-79 coordinates Zn(2+). Residue Asp-81 is part of the active site. Asp-110 serves as a coordination point for Zn(2+). Glu-141 functions as the Proton acceptor in the catalytic mechanism. The Zn(2+) site is built by Glu-142, Glu-170, and His-355.

Belongs to the peptidase M20A family. DapE subfamily. In terms of assembly, homodimer. Zn(2+) is required as a cofactor. It depends on Co(2+) as a cofactor.

The enzyme catalyses N-succinyl-(2S,6S)-2,6-diaminopimelate + H2O = (2S,6S)-2,6-diaminopimelate + succinate. It participates in amino-acid biosynthesis; L-lysine biosynthesis via DAP pathway; LL-2,6-diaminopimelate from (S)-tetrahydrodipicolinate (succinylase route): step 3/3. Catalyzes the hydrolysis of N-succinyl-L,L-diaminopimelic acid (SDAP), forming succinate and LL-2,6-diaminopimelate (DAP), an intermediate involved in the bacterial biosynthesis of lysine and meso-diaminopimelic acid, an essential component of bacterial cell walls. The sequence is that of Succinyl-diaminopimelate desuccinylase from Helicobacter pylori (strain HPAG1).